A 369-amino-acid polypeptide reads, in one-letter code: Delta(14)-sterol reductase (369 aa).

Transmembrane regions (helical) follow at residues 15 to 34, 54 to 76, 86 to 105, 146 to 168, 178 to 195, 208 to 230, and 240 to 262; these read QSVYVLVFYFVYLAVAGEIL, CNGLLALILLVAILGICAKLGIV, LELLSATFIFCVLVTLALYV, FFFVRAGMMGWLLINLSILAKSV, ILYQIFCALYILDYFVHE, RLGFMLVFGDLLWIPFTFSIQGW, and TVPAIVVNCLVFLIGYMVFRGAN. NADP(+) contacts are provided by residues K265, K269, L289, W294, and 301-302; that span reads NY. The chain crosses the membrane as a helical span at residues 275 to 297; the sequence is PIWGKPPVVVGGKLLVSGYWGIA. The helical transmembrane segment at 317–336 threads the bilayer; it reads GISSPVPYFYPIYLLILLIW. NADP(+) contacts are provided by residues D341, 345 to 349, and Y356; that span reads CAEKY.

It belongs to the ERG4/ERG24 family.

The protein localises to the membrane. The catalysed reaction is 4,4-dimethyl-5alpha-cholesta-8,24-dien-3beta-ol + NADP(+) = 4,4-dimethyl-5alpha-cholesta-8,14,24-trien-3beta-ol + NADPH + H(+). Its pathway is steroid biosynthesis; zymosterol biosynthesis; zymosterol from lanosterol: step 2/6. In terms of biological role, reduces the C14=C15 double bond of 4,4-dimethyl-cholesta-8,14,24-trienol to produce 4,4-dimethyl-cholesta-8,24-dienol. Required for cell division and expansion and is involved in proper organization of the embryo. This is Delta(14)-sterol reductase (FK) from Arabidopsis thaliana (Mouse-ear cress).